Consider the following 513-residue polypeptide: Membrane protein (513 aa).

Tandem repeats lie at residues P9 to A11, P12 to A14, P15 to A17, and P18 to A20. Residues P9–A20 form a 4 X 3 AA tandem repeats of P-S-A region. The next 14 helical transmembrane spans lie at L32–P52, G56–I76, A79–F99, T126–L146, I165–A185, N208–I228, Q254–V274, L309–F329, A332–W352, P360–T380, G400–A420, A422–G442, V447–A467, and I487–W507.

The protein belongs to the SLC13A/DASS transporter (TC 2.A.47) family. DIT1 subfamily.

It is found in the cell membrane. This is Membrane protein from Cupriavidus necator (strain ATCC 17699 / DSM 428 / KCTC 22496 / NCIMB 10442 / H16 / Stanier 337) (Ralstonia eutropha).